We begin with the raw amino-acid sequence, 209 residues long: Guanylate kinase (209 aa).

The 180-residue stretch at 5-184 (GLLIVFSGPS…AAERVKRVIE (180 aa)) folds into the Guanylate kinase-like domain. ATP is bound at residue 12 to 19 (GPSGVGKG).

The protein belongs to the guanylate kinase family.

Its subcellular location is the cytoplasm. The enzyme catalyses GMP + ATP = GDP + ADP. Functionally, essential for recycling GMP and indirectly, cGMP. This chain is Guanylate kinase, found in Streptococcus thermophilus (strain CNRZ 1066).